We begin with the raw amino-acid sequence, 306 residues long: Curved DNA-binding protein (306 aa).

One can recognise a J domain in the interval 5–69 (DYYAIMGVKP…QRRAEYDQMW (65 aa)).

It localises to the cytoplasm. It is found in the nucleoid. DNA-binding protein that preferentially recognizes a curved DNA sequence. It is probably a functional analog of DnaJ; displays overlapping activities with DnaJ, but functions under different conditions, probably acting as a molecular chaperone in an adaptive response to environmental stresses other than heat shock. Lacks autonomous chaperone activity; binds native substrates and targets them for recognition by DnaK. Its activity is inhibited by the binding of CbpM. The protein is Curved DNA-binding protein of Escherichia coli (strain K12 / MC4100 / BW2952).